An 85-amino-acid polypeptide reads, in one-letter code: U4-theraphotoxin-Hhn1a (85 aa).

The N-terminal stretch at 1-22 is a signal peptide; the sequence is MKMTLIAILTCAAVLVLHITAA. Residues 23–48 constitute a propeptide that is removed on maturation; sequence EELEAESQLMEVGMPDTELEAVDEER. 3 disulfides stabilise this stretch: Cys-52–Cys-66, Cys-56–Cys-77, and Cys-71–Cys-82.

It belongs to the neurotoxin 12 (Hwtx-2) family. 02 (Hwtx-2) subfamily. In terms of assembly, monomer. Expressed by the venom gland.

It localises to the secreted. Neurotoxin active on both insects and mammals. The protein is U4-theraphotoxin-Hhn1a of Cyriopagopus hainanus (Chinese bird spider).